We begin with the raw amino-acid sequence, 499 residues long: RNA polymerase sigma factor SigA (499 aa).

2 stretches are compositionally biased toward basic residues: residues 1–12 (MSSPKKNFKKPQ) and 77–87 (KKRRGRKPKHA). Disordered stretches follow at residues 1–25 (MSSPKKNFKKPQPKTENQKQALNEE) and 68–89 (QENKESDVPKKRRGRKPKHAPL). The segment at 252-322 (LVTSNLRLVV…TRAIADQART (71 aa)) is sigma-70 factor domain-2. The short motif at 276 to 279 (DLIQ) is the Interaction with polymerase core subunit RpoC element. The segment at 331 to 412 (ETINRLAKAE…DTDAQMPDEF (82 aa)) is sigma-70 factor domain-3. The segment at 425-480 (LLNNCLSEQEELIVRMRIGMPPYNETKTLDEVSQKIKIPREKIRQIETKAIRKLRQ) is sigma-70 factor domain-4. A DNA-binding region (H-T-H motif) is located at residues 453–472 (LDEVSQKIKIPREKIRQIET).

This sequence belongs to the sigma-70 factor family. RpoD/SigA subfamily. Interacts transiently with the RNA polymerase catalytic core.

It is found in the cytoplasm. In terms of biological role, sigma factors are initiation factors that promote the attachment of RNA polymerase to specific initiation sites and are then released. This sigma factor is the primary sigma factor during exponential growth. The protein is RNA polymerase sigma factor SigA of Mycoplasma pneumoniae (strain ATCC 29342 / M129 / Subtype 1) (Mycoplasmoides pneumoniae).